The primary structure comprises 475 residues: Ribulose bisphosphate carboxylase large chain (475 aa).

Residues 1–2 (MS) constitute a propeptide that is removed on maturation. Position 3 is an N-acetylproline (P3). The residue at position 14 (K14) is an N6,N6,N6-trimethyllysine. Residues N123 and T173 each coordinate substrate. The active-site Proton acceptor is the K175. A substrate-binding site is contributed by K177. Mg(2+) is bound by residues K201, D203, and E204. K201 is modified (N6-carboxylysine). H294 (proton acceptor) is an active-site residue. Residues R295, H327, and S379 each contribute to the substrate site.

This sequence belongs to the RuBisCO large chain family. Type I subfamily. Heterohexadecamer of 8 large chains and 8 small chains; disulfide-linked. The disulfide link is formed within the large subunit homodimers. Mg(2+) serves as cofactor. Post-translationally, the disulfide bond which can form in the large chain dimeric partners within the hexadecamer appears to be associated with oxidative stress and protein turnover.

The protein resides in the plastid. The protein localises to the chloroplast. The catalysed reaction is 2 (2R)-3-phosphoglycerate + 2 H(+) = D-ribulose 1,5-bisphosphate + CO2 + H2O. It catalyses the reaction D-ribulose 1,5-bisphosphate + O2 = 2-phosphoglycolate + (2R)-3-phosphoglycerate + 2 H(+). In terms of biological role, ruBisCO catalyzes two reactions: the carboxylation of D-ribulose 1,5-bisphosphate, the primary event in carbon dioxide fixation, as well as the oxidative fragmentation of the pentose substrate in the photorespiration process. Both reactions occur simultaneously and in competition at the same active site. This is Ribulose bisphosphate carboxylase large chain (rbcL) from Cucumis sativus (Cucumber).